Reading from the N-terminus, the 205-residue chain is G-protein coupled receptor (205 aa).

Transmembrane regions (helical) follow at residues 40 to 60, 71 to 91, 107 to 127, 151 to 171, and 185 to 205; these read GITL…MILY, FYVI…FFMT, LVYF…AIIA, IGIL…FVQI, and LSSP…SFIW. An intrachain disulfide couples cysteine 105 to cysteine 181.

It belongs to the G-protein coupled receptor 1 family.

It is found in the host membrane. This Human herpesvirus 6B (strain Z29) (HHV-6 variant B) protein is G-protein coupled receptor (U12).